Reading from the N-terminus, the 213-residue chain is Ribosomal RNA small subunit methyltransferase G (213 aa).

Residues G72, F77, 125–126 (IE), and R141 contribute to the S-adenosyl-L-methionine site.

This sequence belongs to the methyltransferase superfamily. RNA methyltransferase RsmG family.

It is found in the cytoplasm. It catalyses the reaction guanosine(527) in 16S rRNA + S-adenosyl-L-methionine = N(7)-methylguanosine(527) in 16S rRNA + S-adenosyl-L-homocysteine. In terms of biological role, specifically methylates the N7 position of guanine in position 527 of 16S rRNA. This is Ribosomal RNA small subunit methyltransferase G from Rhizobium meliloti (strain 1021) (Ensifer meliloti).